We begin with the raw amino-acid sequence, 731 residues long: E3 ubiquitin-protein ligase SMURF1 (731 aa).

One can recognise a C2 domain in the interval 1–120; the sequence is MSNPGTRRNG…TGYQRLDLCK (120 aa). Residue Ser200 is modified to Phosphoserine. Residues 216 to 237 form a disordered region; sequence EVRGPLQTPQNRPHGHQSPELP. 2 WW domains span residues 234–267 and 280–313; these read PELP…DPRI and GPLP…DPRL. Glycyl lysine isopeptide (Lys-Gly) (interchain with G-Cter in ubiquitin) cross-links involve residues Lys355 and Lys357. One can recognise an HECT domain in the interval 394–731; sequence RPKDLKKRLM…VEETCGFAVE (338 aa). Cys699 acts as the Glycyl thioester intermediate in catalysis.

As to quaternary structure, interacts with TRAF4. Interacts (via HECT domain) with FBXL15 (via LRR repeats). Interacts with SMAD7 and TGFBR1; SMAD7 recruits SMURF1 to TGFBR1 and regulates TGF-beta receptor degradation. Interacts with MAVS; the interaction is mediated by NDFIP1. In terms of processing, auto-ubiquitinated in presence of NDFIP1. Ubiquitinated by the SCF(FBXL15) complex at Lys-355 and Lys-357, leading to its degradation by the proteasome. Lys-357 is the primary ubiquitination site.

It is found in the cytoplasm. The protein resides in the cell membrane. It carries out the reaction S-ubiquitinyl-[E2 ubiquitin-conjugating enzyme]-L-cysteine + [acceptor protein]-L-lysine = [E2 ubiquitin-conjugating enzyme]-L-cysteine + N(6)-ubiquitinyl-[acceptor protein]-L-lysine.. It functions in the pathway protein modification; protein ubiquitination. Functionally, E3 ubiquitin-protein ligase that acts as a negative regulator of BMP signaling pathway. Mediates ubiquitination and degradation of SMAD1 and SMAD5, 2 receptor-regulated SMADs specific for the BMP pathway. Promotes ubiquitination and subsequent proteasomal degradation of TRAF family members and RHOA. Promotes ubiquitination and subsequent proteasomal degradation of MAVS. Acts as an antagonist of TGF-beta signaling by ubiquitinating TGFBR1 and targeting it for degradation. Plays a role in dendrite formation by melanocytes. The protein is E3 ubiquitin-protein ligase SMURF1 (Smurf1) of Mus musculus (Mouse).